We begin with the raw amino-acid sequence, 260 residues long: Imidazole glycerol phosphate synthase subunit HisF (260 aa).

Residues aspartate 11 and aspartate 130 contribute to the active site.

Belongs to the HisA/HisF family. Heterodimer of HisH and HisF.

Its subcellular location is the cytoplasm. The catalysed reaction is 5-[(5-phospho-1-deoxy-D-ribulos-1-ylimino)methylamino]-1-(5-phospho-beta-D-ribosyl)imidazole-4-carboxamide + L-glutamine = D-erythro-1-(imidazol-4-yl)glycerol 3-phosphate + 5-amino-1-(5-phospho-beta-D-ribosyl)imidazole-4-carboxamide + L-glutamate + H(+). It participates in amino-acid biosynthesis; L-histidine biosynthesis; L-histidine from 5-phospho-alpha-D-ribose 1-diphosphate: step 5/9. IGPS catalyzes the conversion of PRFAR and glutamine to IGP, AICAR and glutamate. The HisF subunit catalyzes the cyclization activity that produces IGP and AICAR from PRFAR using the ammonia provided by the HisH subunit. In Caulobacter sp. (strain K31), this protein is Imidazole glycerol phosphate synthase subunit HisF.